The primary structure comprises 253 residues: 5-oxoprolinase subunit A (253 aa).

The protein belongs to the LamB/PxpA family. In terms of assembly, forms a complex composed of PxpA, PxpB and PxpC.

It catalyses the reaction 5-oxo-L-proline + ATP + 2 H2O = L-glutamate + ADP + phosphate + H(+). In terms of biological role, catalyzes the cleavage of 5-oxoproline to form L-glutamate coupled to the hydrolysis of ATP to ADP and inorganic phosphate. In Ruegeria pomeroyi (strain ATCC 700808 / DSM 15171 / DSS-3) (Silicibacter pomeroyi), this protein is 5-oxoprolinase subunit A.